Here is a 542-residue protein sequence, read N- to C-terminus: Chaperonin GroEL 1 (542 aa).

ATP-binding positions include 29–32 (TIGP), 86–90 (DGTTT), glycine 414, 479–481 (DAL), and aspartate 495.

It belongs to the chaperonin (HSP60) family. In terms of assembly, forms a cylinder of 14 subunits composed of two heptameric rings stacked back-to-back. Interacts with the co-chaperonin GroES.

Its subcellular location is the cytoplasm. It catalyses the reaction ATP + H2O + a folded polypeptide = ADP + phosphate + an unfolded polypeptide.. Its function is as follows. Together with its co-chaperonin GroES, plays an essential role in assisting protein folding. The GroEL-GroES system forms a nano-cage that allows encapsulation of the non-native substrate proteins and provides a physical environment optimized to promote and accelerate protein folding. This chain is Chaperonin GroEL 1, found in Synechococcus sp. (strain JA-3-3Ab) (Cyanobacteria bacterium Yellowstone A-Prime).